Reading from the N-terminus, the 339-residue chain is UDP-galactose transporter homolog 1 (339 aa).

Residues methionine 1 to serine 4 are Lumenal-facing. A helical transmembrane segment spans residues threonine 5–valine 25. At glutamine 26 to glutamine 42 the chain is on the cytoplasmic side. The helical transmembrane segment at phenylalanine 43–leucine 63 threads the bilayer. The Lumenal portion of the chain corresponds to asparagine 64–tyrosine 106. Residues leucine 107 to leucine 127 form a helical membrane-spanning segment. The Cytoplasmic segment spans residues tyrosine 128–lysine 136. A helical membrane pass occupies residues lysine 137–glycine 157. Residues lysine 158–glutamine 174 are Lumenal-facing. N-linked (GlcNAc...) asparagine glycosylation occurs at asparagine 165. A helical transmembrane segment spans residues glycine 175–threonine 192. Residues glutamine 193–alanine 214 lie on the Cytoplasmic side of the membrane. Residues histidine 215–isoleucine 235 form a helical membrane-spanning segment. The Lumenal segment spans residues aspartate 236–serine 245. Residues valine 246 to methionine 266 form a helical membrane-spanning segment. Residues glycine 267–serine 280 are Cytoplasmic-facing. A helical membrane pass occupies residues leucine 281–glycine 303. The Lumenal portion of the chain corresponds to lysine 304–arginine 307. Residues phenylalanine 308–asparagine 327 traverse the membrane as a helical segment. The Cytoplasmic segment spans residues lysine 328 to alanine 339.

Belongs to the nucleotide-sugar transporter family. SLC35B subfamily.

Its subcellular location is the endoplasmic reticulum membrane. Its function is as follows. May be involved in specific transport of UDP-Gal from the cytosol to the Golgi lumen. Involved in the maintenance of optimal conditions for the folding of secretory pathway proteins in the endoplasmic reticulum. Overexpression confers resistance to the immunosuppressive drug, leflunomide. This Saccharomyces cerevisiae (strain ATCC 204508 / S288c) (Baker's yeast) protein is UDP-galactose transporter homolog 1 (HUT1).